Consider the following 211-residue polypeptide: Rho-related GTP-binding protein RhoF (211 aa).

At Met-1 the chain carries N-acetylmethionine. 26-33 (GDGGCGKT) lines the GTP pocket. Positions 48-56 (YAPSVFEKY) match the Effector region motif. Residues 73 to 77 (DTAGQ) and 131 to 134 (CKTD) contribute to the GTP site. Cys-208 is modified (cysteine methyl ester). Cys-208 carries S-geranylgeranyl cysteine lipidation. The propeptide at 209–211 (LLL) is removed in mature form.

It belongs to the small GTPase superfamily. Rho family.

It localises to the cell membrane. The protein localises to the cytoplasm. Its subcellular location is the cytoskeleton. Plasma membrane-associated small GTPase which cycles between an active GTP-bound and an inactive GDP-bound state. Causes the formation of thin, actin-rich surface projections called filopodia. Functions cooperatively with CDC42 and Rac to generate additional structures, increasing the diversity of actin-based morphology. This is Rho-related GTP-binding protein RhoF (Rhof) from Mus musculus (Mouse).